The primary structure comprises 214 residues: MKDLSNYRKSYEKSELLETNIPEDPITLFKKWFHEVEDFGGIEEVNAMTVSSIGLDGFPKARVVLLKQFTYEGFIFYTNYDSEKGRAIANNPNICLSFFWHSLERQIIIKGKVKKIAENLSDGYFESRPNGSKLGAIVSNQSEVIASRMILEEKLKQLEDNCVGKEILRPKNWGGYIVEPQEVEFWQGRPNRLHDRIRYKLSADFYWKIERLAP.

Substrate-binding positions include 8–11 and K67; that span reads RKSY. FMN contacts are provided by residues 62–67, 77–78, K84, and Q106; these read RVVLLK and YT. Substrate contacts are provided by Y124, R128, and S132. Residues 141-142 and W186 contribute to the FMN site; that span reads QS. Residue 192–194 participates in substrate binding; that stretch reads RLH. R196 serves as a coordination point for FMN.

This sequence belongs to the pyridoxamine 5'-phosphate oxidase family. As to quaternary structure, homodimer. Requires FMN as cofactor.

The enzyme catalyses pyridoxamine 5'-phosphate + O2 + H2O = pyridoxal 5'-phosphate + H2O2 + NH4(+). The catalysed reaction is pyridoxine 5'-phosphate + O2 = pyridoxal 5'-phosphate + H2O2. It participates in cofactor metabolism; pyridoxal 5'-phosphate salvage; pyridoxal 5'-phosphate from pyridoxamine 5'-phosphate: step 1/1. Its pathway is cofactor metabolism; pyridoxal 5'-phosphate salvage; pyridoxal 5'-phosphate from pyridoxine 5'-phosphate: step 1/1. Its function is as follows. Catalyzes the oxidation of either pyridoxine 5'-phosphate (PNP) or pyridoxamine 5'-phosphate (PMP) into pyridoxal 5'-phosphate (PLP). This is Pyridoxine/pyridoxamine 5'-phosphate oxidase from Flavobacterium psychrophilum (strain ATCC 49511 / DSM 21280 / CIP 103535 / JIP02/86).